We begin with the raw amino-acid sequence, 33 residues long: Potassium channel toxin alpha-KTx 10.4 (33 aa).

Cystine bridges form between cysteine 3–cysteine 22, cysteine 8–cysteine 27, and cysteine 12–cysteine 29.

Belongs to the short scorpion toxin superfamily. Potassium channel inhibitor family. Alpha-KTx 10 subfamily. Expressed by the venom gland.

The protein localises to the secreted. Its function is as follows. Blocks human voltage-gated potassium channel Kv1.2/KCNA2 (IC(50)=3.6 nM) and Kv1.3/KCNA3 (IC(50)=72 nM). This is Potassium channel toxin alpha-KTx 10.4 from Centruroides tecomanus (Scorpion).